Reading from the N-terminus, the 433-residue chain is Enolase (433 aa).

Gln163 is a (2R)-2-phosphoglycerate binding site. Glu205 serves as the catalytic Proton donor. Mg(2+) contacts are provided by Asp242, Glu286, and Asp313. (2R)-2-phosphoglycerate-binding residues include Lys338, Arg367, Ser368, and Lys389. Catalysis depends on Lys338, which acts as the Proton acceptor.

This sequence belongs to the enolase family. It depends on Mg(2+) as a cofactor.

Its subcellular location is the cytoplasm. It localises to the secreted. It is found in the cell surface. It carries out the reaction (2R)-2-phosphoglycerate = phosphoenolpyruvate + H2O. The protein operates within carbohydrate degradation; glycolysis; pyruvate from D-glyceraldehyde 3-phosphate: step 4/5. Catalyzes the reversible conversion of 2-phosphoglycerate (2-PG) into phosphoenolpyruvate (PEP). It is essential for the degradation of carbohydrates via glycolysis. This is Enolase from Koribacter versatilis (strain Ellin345).